Reading from the N-terminus, the 424-residue chain is Arogenate dehydratase 4, chloroplastic (424 aa).

The N-terminal 34 residues, 1–34, are a transit peptide targeting the chloroplast; it reads MQAATSCDLKFRSTDPTSRNKCFSHAIPKRVAVT. The 178-residue stretch at 126 to 303 folds into the Prephenate dehydratase domain; the sequence is RVAYQGVPGA…NVTRFLMLAR (178 aa). The 92-residue stretch at 319–410 folds into the ACT domain; sequence VFAAQEHKGT…SFLRVLGSYP (92 aa).

As to expression, expressed in roots, leaves, stems, flowers and siliques. More abundant in stems and roots.

Its subcellular location is the plastid. The protein resides in the chloroplast stroma. The catalysed reaction is L-arogenate + H(+) = L-phenylalanine + CO2 + H2O. Its pathway is amino-acid biosynthesis; L-phenylalanine biosynthesis; L-phenylalanine from L-arogenate: step 1/1. Converts the prephenate produced from the shikimate-chorismate pathway into phenylalanine. This is Arogenate dehydratase 4, chloroplastic from Arabidopsis thaliana (Mouse-ear cress).